A 187-amino-acid polypeptide reads, in one-letter code: Transcriptional repressor NrdR (187 aa).

A zinc finger lies at 3–34; the sequence is CPFCRHPDSRVVDSRTTDDGTSIRRRRQCPDC. Residues 46 to 136 enclose the ATP-cone domain; that stretch reads LMVVKRSGVT…VYRAFDSLED (91 aa). A disordered region spans residues 146–187; that stretch reads EEQRERPAVDDEDHEDAGAERQGTDRGSGGTVEVPVPATVAD.

It belongs to the NrdR family. Zn(2+) is required as a cofactor.

In terms of biological role, negatively regulates transcription of bacterial ribonucleotide reductase nrd genes and operons by binding to NrdR-boxes. This chain is Transcriptional repressor NrdR, found in Streptomyces avermitilis (strain ATCC 31267 / DSM 46492 / JCM 5070 / NBRC 14893 / NCIMB 12804 / NRRL 8165 / MA-4680).